Consider the following 335-residue polypeptide: MDRIVEIEKYSFDETYETSLRPSNFDGYIGQESIKKNLNVFIAAAKKRNECLDHILFSGPAGLGKTTLANIISYEMSANIKTTAAPMIEKSGDLAAILTNLSEGDILFIDEIHRLSPAIEEVLYPAMEDYRLDIIIGSGPAAQTIKIDLPKFTLIGATTRAGMLSNPLRDRFGMQFRLEFYKDSELALILQKAALKLNKTCEEKAALEIAKRSRSTPRIALRLLKRVRDFADVNDEEIITEKRANEALNSLGVNELGFDAMDLRYLELLTAAKQKPIGLASIAAALSEDENTIEDVIEPYLLANGYIERTAKGRIASAKSYSALKLNYEKTLFEE.

The interval 1-181 (MDRIVEIEKY…FGMQFRLEFY (181 aa)) is large ATPase domain (RuvB-L). ATP is bound at residue leucine 20. The ADP site is built by arginine 21, tyrosine 28, isoleucine 29, glycine 62, leucine 63, glycine 64, lysine 65, threonine 66, and threonine 67. Residues 128–130 (EDY) and arginine 171 each bind ATP. Tyrosine 181 and arginine 218 together coordinate ADP. The segment at 182 to 252 (KDSELALILQ…RANEALNSLG (71 aa)) is small ATPAse domain (RuvB-S). Residues 255–335 (ELGFDAMDLR…LNYEKTLFEE (81 aa)) are head domain (RuvB-H). Positions 309 and 314 each coordinate DNA.

It belongs to the RuvB family. Homohexamer. Forms an RuvA(8)-RuvB(12)-Holliday junction (HJ) complex. HJ DNA is sandwiched between 2 RuvA tetramers; dsDNA enters through RuvA and exits via RuvB. An RuvB hexamer assembles on each DNA strand where it exits the tetramer. Each RuvB hexamer is contacted by two RuvA subunits (via domain III) on 2 adjacent RuvB subunits; this complex drives branch migration. In the full resolvosome a probable DNA-RuvA(4)-RuvB(12)-RuvC(2) complex forms which resolves the HJ.

The protein resides in the cytoplasm. It catalyses the reaction ATP + H2O = ADP + phosphate + H(+). Functionally, the RuvA-RuvB-RuvC complex processes Holliday junction (HJ) DNA during genetic recombination and DNA repair, while the RuvA-RuvB complex plays an important role in the rescue of blocked DNA replication forks via replication fork reversal (RFR). RuvA specifically binds to HJ cruciform DNA, conferring on it an open structure. The RuvB hexamer acts as an ATP-dependent pump, pulling dsDNA into and through the RuvAB complex. RuvB forms 2 homohexamers on either side of HJ DNA bound by 1 or 2 RuvA tetramers; 4 subunits per hexamer contact DNA at a time. Coordinated motions by a converter formed by DNA-disengaged RuvB subunits stimulates ATP hydrolysis and nucleotide exchange. Immobilization of the converter enables RuvB to convert the ATP-contained energy into a lever motion, pulling 2 nucleotides of DNA out of the RuvA tetramer per ATP hydrolyzed, thus driving DNA branch migration. The RuvB motors rotate together with the DNA substrate, which together with the progressing nucleotide cycle form the mechanistic basis for DNA recombination by continuous HJ branch migration. Branch migration allows RuvC to scan DNA until it finds its consensus sequence, where it cleaves and resolves cruciform DNA. The chain is Holliday junction branch migration complex subunit RuvB from Campylobacter jejuni subsp. jejuni serotype O:2 (strain ATCC 700819 / NCTC 11168).